A 251-amino-acid chain; its full sequence is CDP-diacylglycerol pyrophosphatase (251 aa).

The chain crosses the membrane as a helical span at residues 5-25; it reads GYFLLAVIVIVAAAGVGYWKF.

Belongs to the Cdh family.

It localises to the cell inner membrane. The enzyme catalyses a CDP-1,2-diacyl-sn-glycerol + H2O = a 1,2-diacyl-sn-glycero-3-phosphate + CMP + 2 H(+). It functions in the pathway phospholipid metabolism; CDP-diacylglycerol degradation; phosphatidate from CDP-diacylglycerol: step 1/1. This chain is CDP-diacylglycerol pyrophosphatase, found in Salmonella enteritidis PT4 (strain P125109).